The following is a 1217-amino-acid chain: ATP-dependent helicase/nuclease subunit A (1217 aa).

A UvrD-like helicase ATP-binding domain is found at 10-475 (VIWTDAQWQS…IDLSQNFRSR (466 aa)). 31-38 (AAAGSGKT) serves as a coordination point for ATP. The region spanning 476–786 (KEVLSTTNYI…RMMTIHSSKG (311 aa)) is the UvrD-like helicase C-terminal domain.

It belongs to the helicase family. AddA subfamily. In terms of assembly, heterodimer of AddA and AddB/RexB. It depends on Mg(2+) as a cofactor.

The catalysed reaction is Couples ATP hydrolysis with the unwinding of duplex DNA by translocating in the 3'-5' direction.. It carries out the reaction ATP + H2O = ADP + phosphate + H(+). Its function is as follows. The heterodimer acts as both an ATP-dependent DNA helicase and an ATP-dependent, dual-direction single-stranded exonuclease. Recognizes the chi site generating a DNA molecule suitable for the initiation of homologous recombination. The AddA nuclease domain is required for chi fragment generation; this subunit has the helicase and 3' -&gt; 5' nuclease activities. In Staphylococcus aureus (strain MRSA252), this protein is ATP-dependent helicase/nuclease subunit A.